A 303-amino-acid polypeptide reads, in one-letter code: tRNA pseudouridine synthase B (303 aa).

The Nucleophile role is filled by Asp47.

This sequence belongs to the pseudouridine synthase TruB family. Type 1 subfamily.

It catalyses the reaction uridine(55) in tRNA = pseudouridine(55) in tRNA. Functionally, responsible for synthesis of pseudouridine from uracil-55 in the psi GC loop of transfer RNAs. The sequence is that of tRNA pseudouridine synthase B from Legionella pneumophila subsp. pneumophila (strain Philadelphia 1 / ATCC 33152 / DSM 7513).